Reading from the N-terminus, the 466-residue chain is 3-isopropylmalate dehydratase large subunit (466 aa).

Residues Cys-347, Cys-407, and Cys-410 each coordinate [4Fe-4S] cluster.

Belongs to the aconitase/IPM isomerase family. LeuC type 1 subfamily. Heterodimer of LeuC and LeuD. Requires [4Fe-4S] cluster as cofactor.

It catalyses the reaction (2R,3S)-3-isopropylmalate = (2S)-2-isopropylmalate. The protein operates within amino-acid biosynthesis; L-leucine biosynthesis; L-leucine from 3-methyl-2-oxobutanoate: step 2/4. Catalyzes the isomerization between 2-isopropylmalate and 3-isopropylmalate, via the formation of 2-isopropylmaleate. The chain is 3-isopropylmalate dehydratase large subunit from Serratia proteamaculans (strain 568).